Here is a 691-residue protein sequence, read N- to C-terminus: MDQNQHLNKTAEAQPSENKKTRYCNGLKMFLAALSLSFIAKTLGAIIMKSSIIHIERRFEISSSLVGFIDGSFEIGNLLVIVFVSYFGSKLHRPKLIGIGCFIMGIGGVLTALPHFFMGYYRYSKETNINSSENSTSTLSTCLINQILSLNRASPEIVGKGCLKESGSYMWIYVFMGNMLRGIGETPIVPLGLSYIDDFAKEGHSSLYLGILNAIAMIGPIIGFTLGSLFSKMYVDIGYVDLSTIRITPTDSRWVGAWWLNFLVSGLFSIISSIPFFFLPQTPNKPQKERKASLSLHVLETNDEKDQTANLTNQGKNITKNVTGFFQSFKSILTNPLYVMFVLLTLLQVSSYIGAFTYVFKYVEQQYGQPSSKANILLGVITIPIFASGMFLGGYIIKKFKLNTVGIAKFSCFTAVMSLSFYLLYFFILCENKSVAGLTMTYDGNNPVTSHRDVPLSYCNSDCNCDESQWEPVCGNNGITYISPCLAGCKSSSGNKKPIVFYNCSCLEVTGLQNRNYSAHLGECPRDDACTRKFYFFVAIQVLNLFFSALGGTSHVMLIVKIVQPELKSLALGFHSMVIRALGGILAPIYFGALIDTTCIKWSTNNCGTRGSCRTYNSTSFSRVYLGLSSMLRVSSLVLYIILIYAMKKKYQEKDINASENGSVMDEANLESLNKNKHFVPSAGADSETHC.

The Cytoplasmic portion of the chain corresponds to 1–28; sequence MDQNQHLNKTAEAQPSENKKTRYCNGLK. A helical transmembrane segment spans residues 29–48; it reads MFLAALSLSFIAKTLGAIIM. Topologically, residues 49-67 are extracellular; the sequence is KSSIIHIERRFEISSSLVG. Residues 68–88 traverse the membrane as a helical segment; the sequence is FIDGSFEIGNLLVIVFVSYFG. Over 89 to 94 the chain is Cytoplasmic; the sequence is SKLHRP. A helical transmembrane segment spans residues 95-119; that stretch reads KLIGIGCFIMGIGGVLTALPHFFMG. The Extracellular segment spans residues 120 to 168; the sequence is YYRYSKETNINSSENSTSTLSTCLINQILSLNRASPEIVGKGCLKESGS. 2 N-linked (GlcNAc...) asparagine glycosylation sites follow: Asn-130 and Asn-134. The chain crosses the membrane as a helical span at residues 169–197; the sequence is YMWIYVFMGNMLRGIGETPIVPLGLSYID. The Cytoplasmic segment spans residues 198–216; that stretch reads DFAKEGHSSLYLGILNAIA. A helical membrane pass occupies residues 217–237; the sequence is MIGPIIGFTLGSLFSKMYVDI. Over 238 to 255 the chain is Extracellular; that stretch reads GYVDLSTIRITPTDSRWV. The helical transmembrane segment at 256-280 threads the bilayer; it reads GAWWLNFLVSGLFSIISSIPFFFLP. The Cytoplasmic portion of the chain corresponds to 281 to 331; sequence QTPNKPQKERKASLSLHVLETNDEKDQTANLTNQGKNITKNVTGFFQSFKS. 2 positions are modified to phosphoserine: Ser-293 and Ser-295. The helical transmembrane segment at 332-353 threads the bilayer; the sequence is ILTNPLYVMFVLLTLLQVSSYI. The Extracellular segment spans residues 354–373; it reads GAFTYVFKYVEQQYGQPSSK. A helical membrane pass occupies residues 374–397; the sequence is ANILLGVITIPIFASGMFLGGYII. The Cytoplasmic segment spans residues 398 to 401; sequence KKFK. The chain crosses the membrane as a helical span at residues 402-425; it reads LNTVGIAKFSCFTAVMSLSFYLLY. The Extracellular segment spans residues 426 to 537; it reads FFILCENKSV…DACTRKFYFF (112 aa). A glycan (N-linked (GlcNAc...) asparagine) is linked at Asn-432. In terms of domain architecture, Kazal-like spans 453 to 508; that stretch reads DVPLSYCNSDCNCDESQWEPVCGNNGITYISPCLAGCKSSSGNKKPIVFYNCSCLE. 3 disulfides stabilise this stretch: Cys-459-Cys-489, Cys-465-Cys-485, and Cys-474-Cys-506. Residues Asn-503 and Asn-516 are each glycosylated (N-linked (GlcNAc...) asparagine). Residues 538 to 560 traverse the membrane as a helical segment; it reads VAIQVLNLFFSALGGTSHVMLIV. Residues 561-569 lie on the Cytoplasmic side of the membrane; that stretch reads KIVQPELKS. Residues 570–595 form a helical membrane-spanning segment; it reads LALGFHSMVIRALGGILAPIYFGALI. At 596–629 the chain is on the extracellular side; the sequence is DTTCIKWSTNNCGTRGSCRTYNSTSFSRVYLGLS. An N-linked (GlcNAc...) asparagine glycan is attached at Asn-617. A helical transmembrane segment spans residues 630 to 647; sequence SMLRVSSLVLYIILIYAM. Residues 648 to 691 are Cytoplasmic-facing; it reads KKKYQEKDINASENGSVMDEANLESLNKNKHFVPSAGADSETHC. 2 positions are modified to phosphoserine: Ser-672 and Ser-682.

The protein belongs to the organo anion transporter (TC 2.A.60) family. In terms of tissue distribution, highly expressed in liver, at the basolateral membranes of centrilobular hepatocytes. Expressed in liver (at protein level). Expressed in fetal liver. Not detected in heart, brain, placenta, lung, skeletal muscle, kidney, pancreas, spleen, thymus, prostate, testis, ovary, small intestine, colon and leukocyte. In testis, primarily localized to the basal membrane of Sertoli cells and weakly expressed in Leydig cells and within the tubules.

It localises to the basolateral cell membrane. It is found in the basal cell membrane. The enzyme catalyses taurocholate(out) = taurocholate(in). It carries out the reaction dehydroepiandrosterone 3-sulfate(out) = dehydroepiandrosterone 3-sulfate(in). The catalysed reaction is estrone 3-sulfate(out) = estrone 3-sulfate(in). It catalyses the reaction 3,3',5'-triiodo-L-thyronine(out) = 3,3',5'-triiodo-L-thyronine(in). The enzyme catalyses L-thyroxine(out) = L-thyroxine(in). It carries out the reaction prostaglandin E2(out) = prostaglandin E2(in). The catalysed reaction is thromboxane B2(out) = thromboxane B2(in). It catalyses the reaction 17beta-estradiol 17-O-(beta-D-glucuronate)(out) = 17beta-estradiol 17-O-(beta-D-glucuronate)(in). The enzyme catalyses leukotriene C4(out) = leukotriene C4(in). It carries out the reaction leukotriene E4(out) = leukotriene E4(in). The catalysed reaction is (4E,15E)-bilirubin IXalpha C8-beta-D-glucuronoside(out) = (4E,15E)-bilirubin IXalpha C8-beta-D-glucuronoside(in). It catalyses the reaction bilirubin IXalpha bis-beta-D-glucuronoside(out) = bilirubin IXalpha bis-beta-D-glucuronoside(in). Mediates the Na(+)-independent uptake of organic anions. Shows broad substrate specificity, can transport both organic anions such as bile acid taurocholate (cholyltaurine) and conjugated steroids (dehydroepiandrosterone 3-sulfate, 17-beta-glucuronosyl estradiol, and estrone 3-sulfate), as well as eicosanoids (prostaglandin E2, thromboxane B2, leukotriene C4, and leukotriene E4), and thyroid hormones (T4/L-thyroxine, and T3/3,3',5'-triiodo-L-thyronine). Can take up bilirubin glucuronides from plasma into the liver, contributing to the detoxification-enhancing liver-blood shuttling loop. Involved in the clearance of endogenous and exogenous substrates from the liver. Transports coproporphyrin I and III, by-products of heme synthesis, and may be involved in their hepatic disposition. May contribute to regulate the transport of organic compounds in testes across the blood-testis-barrier. Can transport HMG-CoA reductase inhibitors (also known as statins), such as pravastatin and pitavastatin, a clinically important class of hypolipidemic drugs. May play an important role in plasma and tissue distribution of the structurally diverse chemotherapeutic drug methotrexate. May also transport antihypertension agents, such as the angiotensin-converting enzyme (ACE) inhibitor prodrug enalapril, and the highly selective angiotensin II AT1-receptor antagonist valsartan, in the liver. Shows a pH-sensitive substrate specificity towards prostaglandin E2 and T4 which may be ascribed to the protonation state of the binding site and leads to a stimulation of substrate transport in an acidic microenvironment. Hydrogencarbonate/HCO3(-) acts as the probable counteranion that exchanges for organic anions. This Homo sapiens (Human) protein is Solute carrier organic anion transporter family member 1B1 (SLCO1B1).